The primary structure comprises 478 residues: Zinc metalloproteinase/disintegrin (478 aa).

A signal peptide spans 1–20; that stretch reads MIQVLLVTICLAAFPYQGSS. A propeptide spanning residues 21–187 is cleaved from the precursor; that stretch reads IILESGNVND…PIKKASDLNL (167 aa). The Peptidase M12B domain occupies 193 to 389; that stretch reads RYVELFIVVD…QKPQCILKKP (197 aa). 3 cysteine pairs are disulfide-bonded: Cys304-Cys384, Cys344-Cys368, and Cys346-Cys351. His329 contacts Zn(2+). Glu330 is a catalytic residue. Positions 333 and 339 each coordinate Zn(2+). The propeptide occupies 390–407; that stretch reads LRTDTVSTPVSGNELLEA. The region spanning 397–478 is the Disintegrin domain; it reads TPVSGNELLE…ADCPRNGLYG (82 aa). Intrachain disulfides connect Cys411-Cys426, Cys413-Cys421, Cys420-Cys443, Cys434-Cys440, Cys439-Cys464, and Cys452-Cys471. Residues 456–458 carry the Cell attachment site; atypical (MVD) motif; sequence MVD.

Belongs to the venom metalloproteinase (M12B) family. P-II subfamily. P-IIa sub-subfamily. In terms of assembly, monomer (disintegrin). Zn(2+) serves as cofactor. In terms of tissue distribution, expressed by the venom gland.

The protein resides in the secreted. The catalysed reaction is Cleavage of 3-Asn-|-Gln-4, 9-Ser-|-His-10 and 14-Ala-|-Leu-15 bonds in insulin B chain and 14-Tyr-|-Gln-15 and 8-Thr-|-Ser-9 in A chain. Cleaves type IV collagen at 73-Ala-|-Gln-74 in alpha1-(IV) and at 7-Gly-|-Leu-8 in alpha2-(IV).. Its function is as follows. Snake venom zinc metalloproteinase that causes hemorrhage by provoking the degradation of the sub-endothelial matrix proteins (fibronectin, laminin, type IV collagen, nidogen, and gelatins). Potent inhibitor of both collagen- (IC(50)=4 nM) and ADP-induced (IC(50)=8 nM) platelet aggregation. May act by binding to the platelet receptor GPIIb/GPIIIa (ITGA2B/ITGB3). The chain is Zinc metalloproteinase/disintegrin from Crotalus atrox (Western diamondback rattlesnake).